The primary structure comprises 351 residues: L-threonine 3-dehydrogenase (351 aa).

Cys-39 is a binding site for Zn(2+). Residues Thr-41 and His-44 each act as charge relay system in the active site. Zn(2+)-binding residues include His-64, Glu-65, Cys-94, Cys-97, Cys-100, and Cys-108. NAD(+)-binding positions include Ile-176, Asp-196, Arg-201, 271-273, and 295-296; these read LGI and IY.

Belongs to the zinc-containing alcohol dehydrogenase family. In terms of assembly, homotetramer. Requires Zn(2+) as cofactor.

It localises to the cytoplasm. It carries out the reaction L-threonine + NAD(+) = (2S)-2-amino-3-oxobutanoate + NADH + H(+). It functions in the pathway amino-acid degradation; L-threonine degradation via oxydo-reductase pathway; glycine from L-threonine: step 1/2. Its function is as follows. Catalyzes the NAD(+)-dependent oxidation of L-threonine to 2-amino-3-ketobutyrate. This Francisella tularensis subsp. tularensis (strain SCHU S4 / Schu 4) protein is L-threonine 3-dehydrogenase.